Reading from the N-terminus, the 354-residue chain is Peptide chain release factor 1 (354 aa).

N5-methylglutamine is present on glutamine 230.

The protein belongs to the prokaryotic/mitochondrial release factor family. In terms of processing, methylated by PrmC. Methylation increases the termination efficiency of RF1.

The protein localises to the cytoplasm. In terms of biological role, peptide chain release factor 1 directs the termination of translation in response to the peptide chain termination codons UAG and UAA. In Novosphingobium aromaticivorans (strain ATCC 700278 / DSM 12444 / CCUG 56034 / CIP 105152 / NBRC 16084 / F199), this protein is Peptide chain release factor 1.